The sequence spans 765 residues: Polyadenylate-binding protein, cytoplasmic and nuclear (765 aa).

Residues 1–37 (MSADASTTPAADSNVTSTPETSTTPAAPAPEVTAVES) show a composition bias toward low complexity. The segment at 1-49 (MSADASTTPAADSNVTSTPETSTTPAAPAPEVTAVESTTAPNASQPHSA) is disordered. Residues 38–48 (TTAPNASQPHS) are compositionally biased toward polar residues. 4 RRM domains span residues 49 to 127 (ASLY…WSQR), 137 to 214 (GNVF…HHIS), 230 to 307 (TNVY…RAQK), and 333 to 470 (VNLY…LAQR). Disordered regions lie at residues 364–427 (VMRD…ADKK) and 619–657 (PGYG…PEEA). A compositionally biased stretch (basic and acidic residues) spans 377-427 (ESDKEKENKEATKENEKESSEAEKAEKTEEKPADSGDEKKEDKESKKADKK). Residues 628-637 (VPVQQGQMRP) are compositionally biased toward low complexity. Positions 659–736 (AGGLTAQALS…ALNVYDEYMK (78 aa)) constitute a PABC domain. The segment at 737–765 (NKGGESEATGEAAKPKEAAKETSTEENKS) is disordered. The segment covering 749–765 (AKPKEAAKETSTEENKS) has biased composition (basic and acidic residues).

This sequence belongs to the polyadenylate-binding protein type-1 family.

The protein resides in the cytoplasm. It is found in the nucleus. In terms of biological role, binds the poly(A) tail of mRNA. Appears to be an important mediator of the multiple roles of the poly(A) tail in mRNA biogenesis, stability and translation. In the nucleus, involved in both mRNA cleavage and polyadenylation. Is also required for efficient mRNA export to the cytoplasm. Acts in concert with a poly(A)-specific nuclease (PAN) to affect poly(A) tail shortening, which may occur concomitantly with either nucleocytoplasmic mRNA transport or translational initiation. In the cytoplasm, stimulates translation initiation and regulates mRNA decay through translation termination-coupled poly(A) shortening, probably mediated by PAN. This is Polyadenylate-binding protein, cytoplasmic and nuclear (pab1) from Aspergillus oryzae (strain ATCC 42149 / RIB 40) (Yellow koji mold).